A 392-amino-acid chain; its full sequence is Speckle-type POZ protein-like (392 aa).

One can recognise an MATH domain in the interval 31-161 (KFSYMWTINN…DDKLTLFCEV (131 aa)). Residues 200 to 267 (TDCSFFVRGQ…IYTGRAPNLD (68 aa)) enclose the BTB domain.

This sequence belongs to the Tdpoz family. As to quaternary structure, homodimer. Heterodimer with SPOP. Component of cullin-RING-based BCR (BTB-CUL3-RBX1) E3 ubiquitin-protein ligase complexes containing homodimeric SPOPL or the heterodimer formed by SPOP and SPOPL. Interacts with CUL3 and MACROH2A1.

The protein resides in the nucleus. The protein operates within protein modification; protein ubiquitination. Component of a cullin-RING-based BCR (BTB-CUL3-RBX1) E3 ubiquitin-protein ligase complex that mediates the ubiquitination and subsequent proteasomal degradation of target proteins, but with relatively low efficiency. Cullin-RING-based BCR (BTB-CUL3-RBX1) E3 ubiquitin-protein ligase complexes containing homodimeric SPOPL or the heterodimer formed by SPOP and SPOPL are less efficient than ubiquitin ligase complexes containing only SPOP. May function to down-regulate the activity of cullin-RING-based BCR (BTB-CUL3-RBX1) E3 ubiquitin-protein ligase complexes that contain SPOP. The polypeptide is Speckle-type POZ protein-like (SPOPL) (Homo sapiens (Human)).